A 1322-amino-acid polypeptide reads, in one-letter code: Ice nucleation protein InaA (1322 aa).

The segment at 162–1281 is octapeptide periodicity; it reads ATYGSTLSGT…LTAGENSVLI (1120 aa). Composition is skewed to polar residues over residues 271–302, 327–350, 373–398, and 423–446; these read SLTAGYGSTQTAGEDSSLTAGYGSTQTAQKGS, TQTAGEESTQTAGYGSTQTAQKGS, and GSTQTAGEDSSLTAGYGSTQTAQKGS. 4 disordered regions span residues 271–303, 327–358, 372–399, and 423–448; these read SLTAGYGSTQTAGEDSSLTAGYGSTQTAQKGSD, TQTAGEESTQTAGYGSTQTAQKGSDLTAGYGS, YGSTQTAGEDSSLTAGYGSTQTAQKGSD, and TQTAGEESTQTAGYGSTQTAQKGSDL.

The protein belongs to the bacterial ice nucleation protein family.

It is found in the cell outer membrane. Ice nucleation proteins enable bacteria to nucleate crystallization in supercooled water. The protein is Ice nucleation protein InaA (inaA) of Pantoea ananas (Erwinia uredovora).